The sequence spans 156 residues: Small ribosomal subunit protein uS7 (156 aa).

Belongs to the universal ribosomal protein uS7 family. In terms of assembly, part of the 30S ribosomal subunit. Contacts proteins S9 and S11.

One of the primary rRNA binding proteins, it binds directly to 16S rRNA where it nucleates assembly of the head domain of the 30S subunit. Is located at the subunit interface close to the decoding center, probably blocks exit of the E-site tRNA. The protein is Small ribosomal subunit protein uS7 of Vibrio parahaemolyticus serotype O3:K6 (strain RIMD 2210633).